The following is a 194-amino-acid chain: Ion-translocating oxidoreductase complex subunit B (194 aa).

Residues 1–26 are hydrophobic; that stretch reads MSSILIAVIAISALALVFGLILGFAS. Residues 32–90 enclose the 4Fe-4S domain; that stretch reads ESDPIVDQIDSILPQTQCGQCGYPGCKPYAEAIANGDTINKCPPGGQATIEKLADLMGV. 12 residues coordinate [4Fe-4S] cluster: Cys49, Cys52, Cys57, Cys73, Cys114, Cys117, Cys120, Cys124, Cys144, Cys147, Cys150, and Cys154. 2 consecutive 4Fe-4S ferredoxin-type domains span residues 105–134 and 135–164; these read KIAF…GGTK and ALHT…MIPV.

This sequence belongs to the 4Fe4S bacterial-type ferredoxin family. RnfB subfamily. The complex is composed of six subunits: RnfA, RnfB, RnfC, RnfD, RnfE and RnfG. [4Fe-4S] cluster serves as cofactor.

It localises to the cell inner membrane. Functionally, part of a membrane-bound complex that couples electron transfer with translocation of ions across the membrane. This chain is Ion-translocating oxidoreductase complex subunit B, found in Aliivibrio salmonicida (strain LFI1238) (Vibrio salmonicida (strain LFI1238)).